Reading from the N-terminus, the 68-residue chain is Large ribosomal subunit protein uL29 (68 aa).

The protein belongs to the universal ribosomal protein uL29 family.

This chain is Large ribosomal subunit protein uL29 (rpl29), found in Archaeoglobus fulgidus (strain ATCC 49558 / DSM 4304 / JCM 9628 / NBRC 100126 / VC-16).